The chain runs to 335 residues: Tetraacyldisaccharide 4'-kinase (335 aa).

Position 58 to 65 (58 to 65) interacts with ATP; sequence TVGGNGKT.

The protein belongs to the LpxK family.

It carries out the reaction a lipid A disaccharide + ATP = a lipid IVA + ADP + H(+). It functions in the pathway glycolipid biosynthesis; lipid IV(A) biosynthesis; lipid IV(A) from (3R)-3-hydroxytetradecanoyl-[acyl-carrier-protein] and UDP-N-acetyl-alpha-D-glucosamine: step 6/6. Functionally, transfers the gamma-phosphate of ATP to the 4'-position of a tetraacyldisaccharide 1-phosphate intermediate (termed DS-1-P) to form tetraacyldisaccharide 1,4'-bis-phosphate (lipid IVA). The polypeptide is Tetraacyldisaccharide 4'-kinase (Dichelobacter nodosus (strain VCS1703A)).